Consider the following 331-residue polypeptide: Peroxidase 49 (331 aa).

An N-terminal signal peptide occupies residues 1-22 (MARLTSFLLLLSLICFVPLCLC). 4 cysteine pairs are disulfide-bonded: Cys-39–Cys-119, Cys-72–Cys-77, Cys-125–Cys-326, and Cys-204–Cys-236. The active-site Proton acceptor is the His-70. Residues Asp-71, Val-74, Gly-76, Asp-78, and Ser-80 each coordinate Ca(2+). Pro-167 is a binding site for substrate. An N-linked (GlcNAc...) asparagine glycan is attached at Asn-170. Residue His-197 participates in heme b binding. Thr-198 provides a ligand contact to Ca(2+). The N-linked (GlcNAc...) asparagine glycan is linked to Asn-213. Ca(2+) contacts are provided by Asp-249, Ser-252, and Asp-257.

It belongs to the peroxidase family. Classical plant (class III) peroxidase subfamily. The cofactor is heme b. Requires Ca(2+) as cofactor.

It localises to the secreted. It catalyses the reaction 2 a phenolic donor + H2O2 = 2 a phenolic radical donor + 2 H2O. Functionally, removal of H(2)O(2), oxidation of toxic reductants, biosynthesis and degradation of lignin, suberization, auxin catabolism, response to environmental stresses such as wounding, pathogen attack and oxidative stress. These functions might be dependent on each isozyme/isoform in each plant tissue. This Arabidopsis thaliana (Mouse-ear cress) protein is Peroxidase 49 (PER49).